Here is a 188-residue protein sequence, read N- to C-terminus: Large ribosomal subunit protein eL18 (188 aa).

The interval 143 to 188 (RSAREAEKHFGPAPGVPHSHTKPHVRSKGRKFERARGRRASRAYKN) is disordered. Basic residues-rich tracts occupy residues 161–171 (SHTKPHVRSKG) and 178–188 (RGRRASRAYKN).

Belongs to the eukaryotic ribosomal protein eL18 family.

The protein resides in the cytoplasm. The protein is Large ribosomal subunit protein eL18 (rpl-18) of Caenorhabditis briggsae.